Consider the following 309-residue polypeptide: uncharacterized protein (309 aa).

A compositionally biased stretch (basic residues) spans 1–16 (MAGNSRRRGAVRKAGT). The segment at 1-70 (MAGNSRRRGA…AKRTEETETV (70 aa)) is disordered. S-adenosyl-L-methionine contacts are provided by Gly-261, Ile-281, and Leu-290.

This sequence belongs to the class IV-like SAM-binding methyltransferase superfamily. RNA methyltransferase TrmH family.

This is an uncharacterized protein from Mycolicibacterium paratuberculosis (strain ATCC BAA-968 / K-10) (Mycobacterium paratuberculosis).